The chain runs to 171 residues: 3-hydroxydecanoyl-[acyl-carrier-protein] dehydratase (171 aa).

Residue H70 is part of the active site.

The protein belongs to the thioester dehydratase family. FabA subfamily. In terms of assembly, homodimer.

The protein resides in the cytoplasm. The enzyme catalyses a (3R)-hydroxyacyl-[ACP] = a (2E)-enoyl-[ACP] + H2O. It catalyses the reaction (3R)-hydroxydecanoyl-[ACP] = (2E)-decenoyl-[ACP] + H2O. The catalysed reaction is (2E)-decenoyl-[ACP] = (3Z)-decenoyl-[ACP]. It functions in the pathway lipid metabolism; fatty acid biosynthesis. Necessary for the introduction of cis unsaturation into fatty acids. Catalyzes the dehydration of (3R)-3-hydroxydecanoyl-ACP to E-(2)-decenoyl-ACP and then its isomerization to Z-(3)-decenoyl-ACP. Can catalyze the dehydratase reaction for beta-hydroxyacyl-ACPs with saturated chain lengths up to 16:0, being most active on intermediate chain length. The polypeptide is 3-hydroxydecanoyl-[acyl-carrier-protein] dehydratase (Methylococcus capsulatus (strain ATCC 33009 / NCIMB 11132 / Bath)).